Reading from the N-terminus, the 314-residue chain is Trimethylamine N-oxide-binding protein (314 aa).

A signal peptide spans 1 to 24 (MKKIVSLMSALVISVVSFAGISNA). Residues W38, W85, E114, W164, and W212 each coordinate trimethylamine N-oxide.

In terms of assembly, the complex is probably composed of two ATP-binding proteins (TmoW), two transmembrane proteins (TmoV) and a solute-binding protein (TmoX).

Its subcellular location is the periplasm. In terms of biological role, part of the ABC transporter complex TmoXWV involved in trimethylamine N-oxide (TMAO) import. Possesses a high binding affinity toward TMAO, but presents little binding affinity toward betaine, carnitine, trimethylamine (TMA) or dimethylamine (DMA). The protein is Trimethylamine N-oxide-binding protein of Pelagibacter ubique (strain HTCC1062).